The primary structure comprises 134 residues: ATP synthase epsilon chain (134 aa).

Residues 94-104 (AKLAKSRAESH) show a composition bias toward basic and acidic residues. The interval 94–115 (AKLAKSRAESHLEDDDDNTDIN) is disordered.

The protein belongs to the ATPase epsilon chain family. As to quaternary structure, F-type ATPases have 2 components, CF(1) - the catalytic core - and CF(0) - the membrane proton channel. CF(1) has five subunits: alpha(3), beta(3), gamma(1), delta(1), epsilon(1). CF(0) has three main subunits: a, b and c.

It localises to the cell membrane. Produces ATP from ADP in the presence of a proton gradient across the membrane. The protein is ATP synthase epsilon chain of Staphylococcus epidermidis (strain ATCC 12228 / FDA PCI 1200).